We begin with the raw amino-acid sequence, 700 residues long: MIRAMTTPAAVIVDATAYAQAVEDAAHAAAAYYAGGSSPLDDDAYDRLARGIAAWEAEHPDEVLPDSPTGKVAGGAAEGDVPHTVPMLSLDNVFSPEEFTVWTASLARRIDREVTRFSVGPKLDGLAVAARYREGRLTRLITRGDGTAGEDVSHAIGTVEGLPGTLAEPVTVEVRGEILMTTAQFEHANEVRIRHGGQPFANPRNAAAGTLRAKERAYTVPMTFFGYGLLALPGTDAALAGRLEELPYSELMETAAGLGVHTSAGTAVPDVVVGTPEQVVARVQEIAALRAELPFGIDGIVVKADLAADRRAAGSGSRAPRWAIAYKLPAVEKITRLLEVEWNVGRTGIIAPRGVLEPVVIEGSTITYATLHNPADITRRGLRLGDHVMVHRAGDVIPRIEAPVAHLRTGEEQPIVFPEACPRCGSDIDTSEERWRCAQGRNCHLVASLAYAAGRDQLDIEGLGTTRVVQLVEAGLVADLADLFLLRREQLLALERMGETSTDNLLAALARAKEQPLSRVLCALGVRGTGRSMSRRIARYFATMDHIRAADAEAMQRVDGIGVEKAPSVVAEIAELAPLIDRLAAAGVNMTEPGATPPRPADTDGADGATAEAPGDGGPLAGMKVVVTGAMTGNLERLSRNEMNELIERAGGRSSSSVSKNTSLVVAGEGAGSKRAKAEQLGVRLATPEEFAVLVAGLLS.

Residues 42–46 and 89–90 contribute to the NAD(+) site; these read DDAYD and SL. Lys-122 serves as the catalytic N6-AMP-lysine intermediate. NAD(+)-binding residues include Arg-143, Glu-177, Lys-303, and Lys-327. Residues Cys-421, Cys-424, Cys-437, and Cys-443 each coordinate Zn(2+). The tract at residues 590-621 is disordered; the sequence is MTEPGATPPRPADTDGADGATAEAPGDGGPLA. One can recognise a BRCT domain in the interval 615–700; it reads GDGGPLAGMK…FAVLVAGLLS (86 aa).

Belongs to the NAD-dependent DNA ligase family. LigA subfamily. The cofactor is Mg(2+). Mn(2+) is required as a cofactor.

The catalysed reaction is NAD(+) + (deoxyribonucleotide)n-3'-hydroxyl + 5'-phospho-(deoxyribonucleotide)m = (deoxyribonucleotide)n+m + AMP + beta-nicotinamide D-nucleotide.. In terms of biological role, DNA ligase that catalyzes the formation of phosphodiester linkages between 5'-phosphoryl and 3'-hydroxyl groups in double-stranded DNA using NAD as a coenzyme and as the energy source for the reaction. It is essential for DNA replication and repair of damaged DNA. The chain is DNA ligase 2 from Streptomyces coelicolor (strain ATCC BAA-471 / A3(2) / M145).